A 29-amino-acid polypeptide reads, in one-letter code: Cyclotide mela-1 (29 aa).

Residues 1 to 29 constitute a cross-link (cyclopeptide (Gly-Asp)); it reads GKYTCGETCFKGKCYTPGCTCSYPICKKD. 3 disulfide bridges follow: Cys-5/Cys-19, Cys-9/Cys-21, and Cys-14/Cys-26.

This is a cyclic peptide. In terms of processing, contains 3 disulfide bonds.

In terms of biological role, probably participates in a plant defense mechanism (Potential). Binds to and induces leakage in phospholipd membranes, particularly ones containing 1-palmitoyl-2-oleophosphatidylethanolamine (POPE). In vitro, displays cytotoxicity against cultured cells but no hemolytic activity towards fresh erythrocytes. Not active against Gram-negative bacterium E.coli ATCC 25922 or Gram-positive bacterium S.aureus ATCC 25923 up to a concentration of 64 uM. The chain is Cyclotide mela-1 from Melicytus latifolius (Norfolk Island mahoe).